The sequence spans 207 residues: Large ribosomal subunit protein uL4 (207 aa).

The tract at residues lysine 44–glycine 76 is disordered. Positions glycine 60–glycine 76 are enriched in basic residues.

The protein belongs to the universal ribosomal protein uL4 family. Part of the 50S ribosomal subunit.

Its function is as follows. One of the primary rRNA binding proteins, this protein initially binds near the 5'-end of the 23S rRNA. It is important during the early stages of 50S assembly. It makes multiple contacts with different domains of the 23S rRNA in the assembled 50S subunit and ribosome. Functionally, forms part of the polypeptide exit tunnel. The chain is Large ribosomal subunit protein uL4 from Natranaerobius thermophilus (strain ATCC BAA-1301 / DSM 18059 / JW/NM-WN-LF).